Reading from the N-terminus, the 77-residue chain is Large ribosomal subunit protein bL28 (77 aa).

The protein belongs to the bacterial ribosomal protein bL28 family.

The protein is Large ribosomal subunit protein bL28 of Acidovorax ebreus (strain TPSY) (Diaphorobacter sp. (strain TPSY)).